We begin with the raw amino-acid sequence, 314 residues long: Ribonuclease Z (314 aa).

7 residues coordinate Zn(2+): His62, His64, Asp66, His67, His144, Asp215, and His273. Residue Asp66 is the Proton acceptor of the active site.

Belongs to the RNase Z family. In terms of assembly, homodimer. It depends on Zn(2+) as a cofactor.

It catalyses the reaction Endonucleolytic cleavage of RNA, removing extra 3' nucleotides from tRNA precursor, generating 3' termini of tRNAs. A 3'-hydroxy group is left at the tRNA terminus and a 5'-phosphoryl group is left at the trailer molecule.. In terms of biological role, zinc phosphodiesterase, which displays some tRNA 3'-processing endonuclease activity. Probably involved in tRNA maturation, by removing a 3'-trailer from precursor tRNA. This chain is Ribonuclease Z, found in Prochlorococcus marinus (strain NATL1A).